Reading from the N-terminus, the 417-residue chain is Snake venom metalloproteinase acutolysin-C (417 aa).

The signal sequence occupies residues 1 to 20 (MIQVLLVTICLAALPYQGSS). A propeptide spans 21-189 (IMLESGKVND…KRPSRLNLTP (169 aa)) (activation peptide). A Peptidase M12B domain is found at 197–392 (TSVNLQLIVD…KKPKCIHKKS (196 aa)). Disulfide bonds link Cys-308–Cys-387, Cys-349–Cys-371, and Cys-351–Cys-354. His-333 contacts Zn(2+). Glu-334 is a catalytic residue. Zn(2+) contacts are provided by His-337 and His-343. A propeptide spanning residues 393–417 (LKTDTVSTSVSGNEPLDDNVDGFHA) is cleaved from the precursor. The segment at 398-417 (VSTSVSGNEPLDDNVDGFHA) is disordered. Over residues 407-417 (PLDDNVDGFHA) the composition is skewed to acidic residues.

This sequence belongs to the venom metalloproteinase (M12B) family. P-I subfamily. As to quaternary structure, monomer. Requires Zn(2+) as cofactor. As to expression, expressed by the venom gland.

The protein resides in the secreted. Functionally, this protein is an alkaline zinc metalloprotease from snake venom that possesses weak hemorrhagic activity. This Deinagkistrodon acutus (Hundred-pace snake) protein is Snake venom metalloproteinase acutolysin-C.